The chain runs to 150 residues: Large ribosomal subunit protein uL23m (150 aa).

Belongs to the universal ribosomal protein uL23 family. As to quaternary structure, component of the mitochondrial ribosome large subunit (39S) which comprises a 16S rRNA and about 50 distinct proteins.

It localises to the mitochondrion. This chain is Large ribosomal subunit protein uL23m (mRpL23), found in Drosophila melanogaster (Fruit fly).